The sequence spans 450 residues: tRNA modification GTPase MnmE (450 aa).

(6S)-5-formyl-5,6,7,8-tetrahydrofolate-binding residues include Arg23, Glu79, and Lys118. In terms of domain architecture, TrmE-type G spans 214–374; it reads GITLILVGKP…LKEHILNKVG (161 aa). A K(+)-binding site is contributed by Asn224. GTP is bound by residues 224 to 229, 243 to 249, and 268 to 271; these read NAGKSS, TSIAGTT, and DTAG. Position 228 (Ser228) interacts with Mg(2+). K(+)-binding residues include Thr243, Ile245, and Thr248. Thr249 is a binding site for Mg(2+). Lys450 contributes to the (6S)-5-formyl-5,6,7,8-tetrahydrofolate binding site.

Belongs to the TRAFAC class TrmE-Era-EngA-EngB-Septin-like GTPase superfamily. TrmE GTPase family. As to quaternary structure, homodimer. Heterotetramer of two MnmE and two MnmG subunits. The cofactor is K(+).

The protein resides in the cytoplasm. Functionally, exhibits a very high intrinsic GTPase hydrolysis rate. Involved in the addition of a carboxymethylaminomethyl (cmnm) group at the wobble position (U34) of certain tRNAs, forming tRNA-cmnm(5)s(2)U34. The protein is tRNA modification GTPase MnmE of Francisella tularensis subsp. tularensis (strain WY96-3418).